Consider the following 143-residue polypeptide: Protein STIG1 (143 aa).

A signal peptide spans 1–23 (MDFIILLIAILALSSTPITIISG). The tract at residues 76–87 (RTCCFNYFCVDL) is sufficient for PI(4)P binding. Positions 80–83 (FNYF) are sufficient for binding to the extracellular domain of PRK2. The tract at residues 88-115 (FTNRFNCGSCGLVCIVGTRCCGGICVDI) is sufficient for PI(3)P binding.

The protein belongs to the STIG1 family. In terms of assembly, interacts with PRK1 and PRK2 (via extracellular domain). Expressed in the stigma and the upper section of the style.

The protein localises to the secreted. It localises to the extracellular space. It is found in the apoplast. Promotes pollen tube growth. A C-terminal peptide is cleaved from the propeptide in the stigmatic exudate and represent the major form of STIG1. Binds phosphoinositol lipids. The binding of external phosphatidylinositol 3-phosphate (PI(3)P) and PRK2 by STIG1 induces a rapid intracellular reactive oxygen species elevation. This chain is Protein STIG1, found in Solanum lycopersicum (Tomato).